The sequence spans 504 residues: MKNEKRKTGIEPKVFFPPLIIVGILCWLTVRDLDAANVVINAVFSYVTNVWGWAFEWYMVVMLFGWFWLVFGPYAKKRLGNEPPEFSTASWIFMMFASCTSAAVLFWGSIEIYYYISTPPFGLEPNSTGAKELGLAYSLFHWGPLPWATYSFLSVAFAYFFFVRKMEVIRPSSTLVPLVGEKHAKGLFGTIVDNFYLVALIFAMGTSLGLATPLVTECMQWLFGIPHTLQLDAIIITCWIILNAICVACGLQKGVRIASDVRSYLSFLMLGWVFIVSGASFIMNYFTDSVGMLLMYLPRMLFYTDPIAKGGFPQGWTVFYWAWWVIYAIQMSIFLARISRGRTVRELCFGMVLGLTASTWILWTVLGSNTLLLMDKNIINIPNLIEQYGVARAIIETWAALPLSTATMWGFFILCFIATVTLVNACSYTLAMSTCREVRDGEEPPLLVRIGWSILVGIIGIVLLALGGLKPIQTAIIAGGCPLFFVNIMVTLSFIKDAKQNWKD.

12 consecutive transmembrane segments (helical) span residues 10 to 30 (IEPK…WLTV), 51 to 71 (WGWA…WLVF), 92 to 112 (IFMM…SIEI), 143 to 163 (GPLP…FFFV), 195 to 215 (FYLV…TPLV), 231 to 251 (LDAI…ACGL), 263 to 283 (SYLS…SFIM), 316 to 336 (WTVF…IFLA), 347 to 367 (LCFG…TVLG), 398 to 418 (WAAL…CFIA), 446 to 466 (LLVR…LLAL), and 475 to 495 (AIIA…LSFI).

This sequence belongs to the BCCT transporter (TC 2.A.15) family. CaiT subfamily. As to quaternary structure, homotrimer.

It localises to the cell inner membrane. The enzyme catalyses 4-(trimethylamino)butanoate(in) + (R)-carnitine(out) = 4-(trimethylamino)butanoate(out) + (R)-carnitine(in). Its pathway is amine and polyamine metabolism; carnitine metabolism. Catalyzes the exchange of L-carnitine for gamma-butyrobetaine. The protein is L-carnitine/gamma-butyrobetaine antiporter of Escherichia coli (strain ATCC 8739 / DSM 1576 / NBRC 3972 / NCIMB 8545 / WDCM 00012 / Crooks).